The chain runs to 468 residues: 6-phospho-beta-galactosidase (468 aa).

The D-galactose 6-phosphate site is built by Gln-19, His-116, Asn-159, Glu-160, and Asn-297. The active-site Proton donor is the Glu-160. Catalysis depends on Glu-375, which acts as the Nucleophile. The D-galactose 6-phosphate site is built by Ser-428, Trp-429, Lys-435, and Tyr-437.

Belongs to the glycosyl hydrolase 1 family.

The catalysed reaction is a 6-phospho-beta-D-galactoside + H2O = D-galactose 6-phosphate + an alcohol. It functions in the pathway carbohydrate metabolism; lactose degradation; D-galactose 6-phosphate and beta-D-glucose from lactose 6-phosphate: step 1/1. The sequence is that of 6-phospho-beta-galactosidase from Streptococcus uberis (strain ATCC BAA-854 / 0140J).